The primary structure comprises 293 residues: Shikimate dehydrogenase (NADP(+)) (293 aa).

Residues 26–28 (SKS) and Thr-73 each bind shikimate. Lys-77 serves as the catalytic Proton acceptor. Asp-89 is a binding site for NADP(+). Shikimate-binding residues include Asn-98 and Asp-113. NADP(+)-binding positions include 137 to 141 (GAGGA), 161 to 166 (NRTKQR), and Ile-231. Tyr-233 contributes to the shikimate binding site. Gly-254 is a binding site for NADP(+).

It belongs to the shikimate dehydrogenase family. In terms of assembly, homodimer.

The enzyme catalyses shikimate + NADP(+) = 3-dehydroshikimate + NADPH + H(+). The protein operates within metabolic intermediate biosynthesis; chorismate biosynthesis; chorismate from D-erythrose 4-phosphate and phosphoenolpyruvate: step 4/7. Its function is as follows. Involved in the biosynthesis of the chorismate, which leads to the biosynthesis of aromatic amino acids. Catalyzes the reversible NADPH linked reduction of 3-dehydroshikimate (DHSA) to yield shikimate (SA). This is Shikimate dehydrogenase (NADP(+)) from Bartonella henselae (strain ATCC 49882 / DSM 28221 / CCUG 30454 / Houston 1) (Rochalimaea henselae).